Here is a 150-residue protein sequence, read N- to C-terminus: Large ribosomal subunit protein bL9 (150 aa).

Belongs to the bacterial ribosomal protein bL9 family.

Binds to the 23S rRNA. The chain is Large ribosomal subunit protein bL9 from Alkalilimnicola ehrlichii (strain ATCC BAA-1101 / DSM 17681 / MLHE-1).